The primary structure comprises 826 residues: Dolichyl-diphosphooligosaccharide--protein glycosyltransferase subunit STT3B (826 aa).

The segment at 1–60 (MAEPSAPESKHKSSLNSSPWSGLMALGNSRHGHHGPGAQCAHKAAGGVAPPKPAPAGLSG) is disordered. Ala2 is modified (N-acetylalanine). The Cytoplasmic portion of the chain corresponds to 2–41 (AEPSAPESKHKSSLNSSPWSGLMALGNSRHGHHGPGAQCA). Phosphoserine is present on residues Ser13, Ser18, and Ser29. Residues 42-86 (HKAAGGVAPPKPAPAGLSGGLSQPAGWQSLLSFTILFLAWLAGFS) form a helical membrane-spanning segment. At 87 to 173 (SRLFAVIRFE…VHIRDVCVFL (87 aa)) the chain is on the lumenal side. The DXD motif 1 signature appears at 101–103 (EFD). Asp103 provides a ligand contact to Mn(2+). The chain crosses the membrane as a helical span at residues 174-192 (APTFSGLTSISTFLLTREL). Over 193 to 194 (WN) the chain is Cytoplasmic. The chain crosses the membrane as a helical span at residues 195–212 (QGAGLLAACFIAIVPGYI). Residues 213-223 (SRSVAGSFDNE) are Lumenal-facing. Positions 221 and 223 each coordinate Mn(2+). The DXD motif 2 signature appears at 221–223 (DNE). The helical transmembrane segment at 224-243 (GIAIFALQFTYYLWVKSVKT) threads the bilayer. Residues 244 to 245 (GS) lie on the Cytoplasmic side of the membrane. A helical transmembrane segment spans residues 246-260 (VFWTMCCCLSYFYMV). The Lumenal portion of the chain corresponds to 261-265 (SAWGG). The helical transmembrane segment at 266-282 (YVFIINLIPLHVFVLLL) threads the bilayer. Over 283–287 (MQRYS) the chain is Cytoplasmic. The chain crosses the membrane as a helical span at residues 288 to 313 (KRVYIAYSTFYIVGLILSMQIPFVGF). The Lumenal portion of the chain corresponds to 314–321 (QPIRTSEH). A helical transmembrane segment spans residues 322–341 (MAAAGVFALLQAYAFLQYLR). The Cytoplasmic portion of the chain corresponds to 342 to 350 (DRLTKQEFQ). The helical transmembrane segment at 351–371 (TLFFLGVSLAAGAVFLSVIYL) threads the bilayer. The Lumenal portion of the chain corresponds to 372 to 410 (TYTGYIAPWSGRFYSLWDTGYAKIHIPIIASVSEHQPTT). Residues 402 to 405 (SVSE) carry the SVSE motif motif. Residues 411–433 (WVSFFFDLHILVCTFPAGLWFCI) traverse the membrane as a helical segment. Residues 434–439 (KNINDE) are Cytoplasmic-facing. A helical membrane pass occupies residues 440 to 456 (RVFVALYAISAVYFAGV). Residues 457 to 460 (MVRL) lie on the Lumenal side of the membrane. Arg459 is a binding site for dolichyl diphosphooligosaccharide. Residues 461–482 (MLTLTPVVCMLSAIAFSNVFEH) traverse the membrane as a helical segment. The Cytoplasmic portion of the chain corresponds to 483 to 526 (YLGDDMKRENPPVEDSSDEDDKRNPGNLYDKAGKVRKHVTEQEK). Residues 490–512 (RENPPVEDSSDEDDKRNPGNLYD) are disordered. Ser498 and Ser499 each carry phosphoserine. The chain crosses the membrane as a helical span at residues 527–552 (TEEGLGPNIKSIVTMLMLMLLMMFAV). Over 553–826 (HCTWVTSNAY…KGKKISKKTV (274 aa)) the chain is Lumenal. The segment at 604 to 606 (WWD) is interacts with target acceptor peptide in protein substrate. The WWDYG motif signature appears at 604–608 (WWDYG). Dolichyl diphosphooligosaccharide is bound at residue Tyr609. Asn616 and Asn623 each carry an N-linked (GlcNAc...) asparagine glycan. Asn627 carries N-linked (GlcNAc...) (high mannose) asparagine glycosylation. Residue Asn641 is glycosylated (N-linked (GlcNAc...) asparagine). The DK motif signature appears at 671-678 (DINKFLWM).

This sequence belongs to the STT3 family. As to quaternary structure, component of the oligosaccharyltransferase (OST) complex. There are 2 OST complexes, OST-A and OST-B, which contain STT3A or STT3B as catalytic subunit, respectively. OST-A and OST-B contain common core subunits RPN1, RPN2, OST48, OST4, DAD1 and TMEM258, and OST-B contains either MAGT1 or TUSC3 as specific accessory subunit. Mg(2+) is required as a cofactor. Requires Mn(2+) as cofactor.

It is found in the endoplasmic reticulum. The protein localises to the endoplasmic reticulum membrane. The catalysed reaction is a di-trans,poly-cis-dolichyl diphosphooligosaccharide + L-asparaginyl-[protein] = N(4)-(oligosaccharide-(1-&gt;4)-N-acetyl-beta-D-glucosaminyl-(1-&gt;4)-N-acetyl-beta-D-glucosaminyl)-L-asparaginyl-[protein] + a di-trans,poly-cis-dolichyl diphosphate + H(+). Its pathway is protein modification; protein glycosylation. Its function is as follows. Catalytic subunit of the oligosaccharyl transferase (OST) complex that catalyzes the initial transfer of a defined glycan (Glc(3)Man(9)GlcNAc(2) in eukaryotes) from the lipid carrier dolichol-pyrophosphate to an asparagine residue within an Asn-X-Ser/Thr consensus motif in nascent polypeptide chains, the first step in protein N-glycosylation. N-glycosylation occurs cotranslationally and the complex associates with the Sec61 complex at the channel-forming translocon complex that mediates protein translocation across the endoplasmic reticulum (ER). All subunits are required for a maximal enzyme activity. This subunit contains the active site and the acceptor peptide and donor lipid-linked oligosaccharide (LLO) binding pockets. STT3B is present in a small subset of OST complexes and mediates both cotranslational and post-translational N-glycosylation of target proteins: STT3B-containing complexes are required for efficient post-translational glycosylation and while they are less competent than STT3A-containing complexes for cotranslational glycosylation, they have the ability to mediate glycosylation of some nascent sites that are not accessible for STT3A. STT3B-containing complexes also act post-translationally and mediate modification of skipped glycosylation sites in unfolded proteins. Plays a role in ER-associated degradation (ERAD) pathway that mediates ubiquitin-dependent degradation of misfolded endoplasmic reticulum proteins by mediating N-glycosylation of unfolded proteins, which are then recognized by the ERAD pathway and targeted for degradation. The chain is Dolichyl-diphosphooligosaccharide--protein glycosyltransferase subunit STT3B from Canis lupus familiaris (Dog).